The primary structure comprises 190 residues: Dynein axonemal light chain 1 (190 aa).

N-acetylalanine is present on A2. LRR repeat units lie at residues 49-70, 71-92, 94-115, and 116-137; these read NCEK…NGLK, NLRI…EAVG, TLEE…HVMK, and KLKI…VKLA. Residue S56 is modified to Phosphoserine. An LRRCT domain is found at 150–190; the sequence is NPLEEKHSAEGNWVEEATKRVPKLKKLDGTPVIKEDEEEDN.

The protein belongs to the dynein light chain LC1-type family. As to quaternary structure, interacts with ZMYND10 (via C-terminus). Interacts with DNAH5, a outer arm dynein heavy chain. Interacts with tubulin located within the A-tubule of the outer doublets in a ATP-independent manner.

It localises to the cytoplasm. The protein resides in the cytoskeleton. The protein localises to the cilium axoneme. Part of the multisubunit axonemal ATPase complexes that generate the force for cilia motility and govern beat frequency. Component of the outer arm dynein (ODA). May be involved in a mechanosensory feedback mechanism controlling ODA activity based on external conformational cues by tethering the outer arm dynein heavy chain (DNAH5) to the microtubule within the axoneme. Important for ciliary function in the airways and for the function of the cilia that produce the nodal flow essential for the determination of the left-right asymmetry. The protein is Dynein axonemal light chain 1 (DNAL1) of Bos taurus (Bovine).